The primary structure comprises 657 residues: Chemoreceptor McpA (657 aa).

Residues 1-5 are Cytoplasmic-facing; it reads MKRIR. The helical transmembrane segment at 6–29 threads the bilayer; that stretch reads LVDLPLIIKIGFAPAFALLMLAVM. Over 30 to 188 the chain is Periplasmic; the sequence is AGGAILVQKS…ESESAKRQAQ (159 aa). A helical membrane pass occupies residues 189-212; the sequence is ATAAMSVTIIMSLLTLGAVGALAF. The Cytoplasmic portion of the chain corresponds to 213 to 657; that stretch reads LTVMTTRKSI…APASDGWEEF (445 aa). HAMP domains follow at residues 216-269 and 297-349; these read MTTR…HLEQ and QEAS…ETMK. Positions 354-583 constitute a Methyl-accepting transducer domain; the sequence is STDGLSTGAD…QSTAATHSLK (230 aa). Gln378 carries the post-translational modification Glutamate methyl ester (Gln). Residues Glu385 and Glu392 each carry the glutamate methyl ester (Glu) modification. Position 574 is a glutamate methyl ester (Gln) (Gln574). Residues 634–657 are disordered; sequence ARPGRSSGSAALAQAPASDGWEEF.

It belongs to the methyl-accepting chemotaxis (MCP) protein family.

The protein resides in the cell membrane. Its function is as follows. Chemotactic-signal transducers respond to changes in the concentration of attractants and repellents in the environment, transduce a signal from the outside to the inside of the cell, and facilitate sensory adaptation through the variation of the level of methylation. Attractants increase the level of methylation while repellents decrease the level of methylation. This Caulobacter vibrioides (strain ATCC 19089 / CIP 103742 / CB 15) (Caulobacter crescentus) protein is Chemoreceptor McpA (mcpA).